The primary structure comprises 507 residues: Putative thymidine phosphorylase (507 aa).

It belongs to the thymidine/pyrimidine-nucleoside phosphorylase family. Type 2 subfamily.

It carries out the reaction thymidine + phosphate = 2-deoxy-alpha-D-ribose 1-phosphate + thymine. This chain is Putative thymidine phosphorylase, found in Ralstonia nicotianae (strain ATCC BAA-1114 / GMI1000) (Ralstonia solanacearum).